The sequence spans 391 residues: Dual-specificity RNA methyltransferase RlmN (391 aa).

Residues 1-20 (MTSVVADSLTETKTDSQKPI) are disordered. The span at 10–20 (TETKTDSQKPI) shows a compositional bias: basic and acidic residues. Glu120 serves as the catalytic Proton acceptor. The region spanning 126–366 (DADRGTLCIS…APVRRTRGQD (241 aa)) is the Radical SAM core domain. An intrachain disulfide couples Cys133 to Cys371. [4Fe-4S] cluster contacts are provided by Cys140, Cys144, and Cys147. Residues 195 to 196 (GE), Ser227, 249 to 251 (SLH), and Asn328 contribute to the S-adenosyl-L-methionine site. Cys371 acts as the S-methylcysteine intermediate in catalysis.

This sequence belongs to the radical SAM superfamily. RlmN family. It depends on [4Fe-4S] cluster as a cofactor.

It localises to the cytoplasm. It carries out the reaction adenosine(2503) in 23S rRNA + 2 reduced [2Fe-2S]-[ferredoxin] + 2 S-adenosyl-L-methionine = 2-methyladenosine(2503) in 23S rRNA + 5'-deoxyadenosine + L-methionine + 2 oxidized [2Fe-2S]-[ferredoxin] + S-adenosyl-L-homocysteine. It catalyses the reaction adenosine(37) in tRNA + 2 reduced [2Fe-2S]-[ferredoxin] + 2 S-adenosyl-L-methionine = 2-methyladenosine(37) in tRNA + 5'-deoxyadenosine + L-methionine + 2 oxidized [2Fe-2S]-[ferredoxin] + S-adenosyl-L-homocysteine. In terms of biological role, specifically methylates position 2 of adenine 2503 in 23S rRNA and position 2 of adenine 37 in tRNAs. m2A2503 modification seems to play a crucial role in the proofreading step occurring at the peptidyl transferase center and thus would serve to optimize ribosomal fidelity. This chain is Dual-specificity RNA methyltransferase RlmN, found in Zymomonas mobilis subsp. mobilis (strain ATCC 31821 / ZM4 / CP4).